A 274-amino-acid chain; its full sequence is 4-hydroxy-tetrahydrodipicolinate reductase (274 aa).

12–17 (GAAGRM) is an NAD(+) binding site. Arg39 is an NADP(+) binding site. NAD(+)-binding positions include 102 to 104 (GTT) and 126 to 129 (SGNM). His160 acts as the Proton donor/acceptor in catalysis. His161 contacts (S)-2,3,4,5-tetrahydrodipicolinate. Residue Lys164 is the Proton donor of the active site. (S)-2,3,4,5-tetrahydrodipicolinate is bound at residue 170 to 171 (GT).

It belongs to the DapB family.

It localises to the cytoplasm. It carries out the reaction (S)-2,3,4,5-tetrahydrodipicolinate + NAD(+) + H2O = (2S,4S)-4-hydroxy-2,3,4,5-tetrahydrodipicolinate + NADH + H(+). The catalysed reaction is (S)-2,3,4,5-tetrahydrodipicolinate + NADP(+) + H2O = (2S,4S)-4-hydroxy-2,3,4,5-tetrahydrodipicolinate + NADPH + H(+). It participates in amino-acid biosynthesis; L-lysine biosynthesis via DAP pathway; (S)-tetrahydrodipicolinate from L-aspartate: step 4/4. Functionally, catalyzes the conversion of 4-hydroxy-tetrahydrodipicolinate (HTPA) to tetrahydrodipicolinate. The sequence is that of 4-hydroxy-tetrahydrodipicolinate reductase from Rhizobium rhizogenes (strain K84 / ATCC BAA-868) (Agrobacterium radiobacter).